We begin with the raw amino-acid sequence, 188 residues long: Peptidyl-tRNA hydrolase (188 aa).

Tyrosine 18 contacts tRNA. Histidine 23 functions as the Proton acceptor in the catalytic mechanism. Residues tyrosine 67, asparagine 69, and asparagine 115 each coordinate tRNA.

This sequence belongs to the PTH family. In terms of assembly, monomer.

The protein resides in the cytoplasm. The catalysed reaction is an N-acyl-L-alpha-aminoacyl-tRNA + H2O = an N-acyl-L-amino acid + a tRNA + H(+). Functionally, hydrolyzes ribosome-free peptidyl-tRNAs (with 1 or more amino acids incorporated), which drop off the ribosome during protein synthesis, or as a result of ribosome stalling. Catalyzes the release of premature peptidyl moieties from peptidyl-tRNA molecules trapped in stalled 50S ribosomal subunits, and thus maintains levels of free tRNAs and 50S ribosomes. The sequence is that of Peptidyl-tRNA hydrolase from Salinibacter ruber (strain DSM 13855 / M31).